Reading from the N-terminus, the 98-residue chain is Small ribosomal subunit protein uS19 (98 aa).

Positions 77 to 98 (TRTYRGHAGGKSEKGGSAPRKK) are disordered.

Belongs to the universal ribosomal protein uS19 family.

Its function is as follows. Protein S19 forms a complex with S13 that binds strongly to the 16S ribosomal RNA. This Chlorobium phaeobacteroides (strain BS1) protein is Small ribosomal subunit protein uS19.